A 127-amino-acid polypeptide reads, in one-letter code: Aspartate 1-decarboxylase (127 aa).

Ser-25 (schiff-base intermediate with substrate; via pyruvic acid) is an active-site residue. Ser-25 is modified (pyruvic acid (Ser)). Thr-57 contacts substrate. Tyr-58 acts as the Proton donor in catalysis. 73-75 serves as a coordination point for substrate; it reads GAA.

Belongs to the PanD family. In terms of assembly, heterooctamer of four alpha and four beta subunits. Pyruvate is required as a cofactor. In terms of processing, is synthesized initially as an inactive proenzyme, which is activated by self-cleavage at a specific serine bond to produce a beta-subunit with a hydroxyl group at its C-terminus and an alpha-subunit with a pyruvoyl group at its N-terminus.

Its subcellular location is the cytoplasm. It carries out the reaction L-aspartate + H(+) = beta-alanine + CO2. It participates in cofactor biosynthesis; (R)-pantothenate biosynthesis; beta-alanine from L-aspartate: step 1/1. Its function is as follows. Catalyzes the pyruvoyl-dependent decarboxylation of aspartate to produce beta-alanine. In Listeria monocytogenes serotype 4b (strain F2365), this protein is Aspartate 1-decarboxylase.